The sequence spans 1008 residues: Ubiquitin carboxyl-terminal hydrolase 16 (1008 aa).

A helical membrane pass occupies residues 7–27; it reads LGISSLVLVVSLVLPLIGLFV. Cysteine 74, cysteine 77, cysteine 85, cysteine 88, cysteine 94, cysteine 98, histidine 107, and cysteine 111 together coordinate Zn(2+). Residues 74–111 form an MYND-type zinc finger; the sequence is CPVCYCLATTRCSRCKAVRYCSGKCQIIHWRQGHKDEC. 5 disordered regions span residues 122-149, 159-178, 187-233, 275-309, and 326-379; these read DESDSDLRLGEENGQNTPEETLLVGPEP, LSNRARSPEDGNGDIADNKD, VSVA…LDAH, SVHKPEDDAGQNQSQSRSLHSLVTDRHPVSADPSL, and SDSC…YISD. Over residues 193–203 the composition is skewed to low complexity; sequence SGSSFSGFSSS. Over residues 222 to 233 the composition is skewed to basic and acidic residues; that stretch reads ESERSESLLDAH. The segment covering 284 to 295 has biased composition (polar residues); it reads GQNQSQSRSLHS. The segment covering 340-351 has biased composition (low complexity); that stretch reads SSLHFSFGSGSS. Residues 542-847 enclose the USP domain; that stretch reads CGLINVGNSC…GAYMLFYARC (306 aa). The Nucleophile role is filled by cysteine 551. The active-site Proton acceptor is histidine 807. Disordered regions lie at residues 859-905 and 952-1008; these read KTEA…GNIQ and FIFG…GGER. Composition is skewed to low complexity over residues 878 to 888 and 965 to 992; these read STISRSVSTSS and SETPSPTSSSSSSSPPFTRRSPLSRSSP.

It belongs to the peptidase C19 family. As to quaternary structure, interacts with SHM1 and SHM4. Interacts with HIPP27. In terms of tissue distribution, expressed in flowers, siliques, rosette leaves, cauline leaves, stems and at a lower level in roots. In roots, expressed in the sieve elements.

It is found in the membrane. It carries out the reaction Thiol-dependent hydrolysis of ester, thioester, amide, peptide and isopeptide bonds formed by the C-terminal Gly of ubiquitin (a 76-residue protein attached to proteins as an intracellular targeting signal).. Its function is as follows. Recognizes and hydrolyzes the peptide bond at the C-terminal Gly of ubiquitin. Involved in the processing of poly-ubiquitin precursors as well as that of ubiquitinated proteins. Involved in salt tolerance by modulating sodium transport activity and repressing cell death at least partially through modulating SHM1 stability and activity. Involved in cadmium tolerance by interacting with HIPP27 and probably modulating its stability. The sequence is that of Ubiquitin carboxyl-terminal hydrolase 16 (UBP16) from Arabidopsis thaliana (Mouse-ear cress).